The chain runs to 198 residues: Holliday junction resolvase RecU (198 aa).

Residues 1-29 (MIRYPNGKSYQPKTAASSLQKKPSYSNRG) are disordered. Over residues 8 to 29 (KSYQPKTAASSLQKKPSYSNRG) the composition is skewed to polar residues. Residues T83, D85, E98, and Q117 each contribute to the Mg(2+) site.

Belongs to the RecU family. Mg(2+) serves as cofactor.

Its subcellular location is the cytoplasm. The catalysed reaction is Endonucleolytic cleavage at a junction such as a reciprocal single-stranded crossover between two homologous DNA duplexes (Holliday junction).. Functionally, endonuclease that resolves Holliday junction intermediates in genetic recombination. Cleaves mobile four-strand junctions by introducing symmetrical nicks in paired strands. Promotes annealing of linear ssDNA with homologous dsDNA. Required for DNA repair, homologous recombination and chromosome segregation. The chain is Holliday junction resolvase RecU from Bacillus licheniformis (strain ATCC 14580 / DSM 13 / JCM 2505 / CCUG 7422 / NBRC 12200 / NCIMB 9375 / NCTC 10341 / NRRL NRS-1264 / Gibson 46).